Reading from the N-terminus, the 219-residue chain is uncharacterized protein (219 aa).

2 helical membrane-spanning segments follow: residues 81–101 (VVKWFIIVDPLINSILINYLI) and 168–188 (PIMEIQMVAVPLALPSPTALV).

The protein localises to the membrane. This is an uncharacterized protein from Saccharomyces cerevisiae (strain ATCC 204508 / S288c) (Baker's yeast).